We begin with the raw amino-acid sequence, 352 residues long: MTAALHIGHLSKSFQNTPVLNDISLSLDPGEILFIIGASGCGKTTLLRCLAGFEQPDSGEISLSGKTIFSKNTNLPVRERRLGYLVQEGVLFPHLTVYRNIAYGLGNGKGRTAQERQRIEAMLELTGISELAGRYPHELSGGQQQRVALARALAPDPELILLDEPFSALDEQLRRQIREDMIAALRANGKSAVFVSHDREEALQYADRIAVMKQGRILQTASPHELYRQPADLDAALFIGEGIVFPAALNADGTADCRLGRLPVQSGAPAGTRGTLLIRPEQFSLHPHSAPAASIHAVVLKTTPKARHTEISLRAGQTVLTLNLPSAPTLSDGISAVLHLDGPALFFPGNTL.

An ABC transporter domain is found at 5 to 239; the sequence is LHIGHLSKSF…PADLDAALFI (235 aa). An ATP-binding site is contributed by 37-44; that stretch reads GASGCGKT.

This sequence belongs to the ABC transporter superfamily. Fe(3+) ion importer (TC 3.A.1.10) family. As to quaternary structure, the complex is composed of two ATP-binding proteins (FbpC), two transmembrane proteins (FbpB) and a solute-binding protein (FbpA).

The protein localises to the cell inner membrane. The enzyme catalyses Fe(3+)(out) + ATP + H2O = Fe(3+)(in) + ADP + phosphate + H(+). Part of the ABC transporter complex FbpABC involved in Fe(3+) ions import. Responsible for energy coupling to the transport system. In Neisseria gonorrhoeae (strain ATCC 700825 / FA 1090), this protein is Fe(3+) ions import ATP-binding protein FbpC.